Here is a 349-residue protein sequence, read N- to C-terminus: Probable tRNA pseudouridine synthase B (349 aa).

Asp41 functions as the Nucleophile in the catalytic mechanism. The region spanning Tyr207–Ile279 is the PUA domain. Residues Ile300–Leu309 show a composition bias toward basic and acidic residues. The interval Ile300–Arg349 is disordered.

Belongs to the pseudouridine synthase TruB family. Type 2 subfamily.

It carries out the reaction uridine(55) in tRNA = pseudouridine(55) in tRNA. Its function is as follows. Could be responsible for synthesis of pseudouridine from uracil-55 in the psi GC loop of transfer RNAs. This Picrophilus torridus (strain ATCC 700027 / DSM 9790 / JCM 10055 / NBRC 100828 / KAW 2/3) protein is Probable tRNA pseudouridine synthase B.